We begin with the raw amino-acid sequence, 392 residues long: GDSL esterase/lipase ESM1 (392 aa).

A signal peptide spans 1-28 (MADNLNLVSVLGVLLVLTIFHNPIIVYA). Residue S43 is the Nucleophile of the active site. N146, N166, and N290 each carry an N-linked (GlcNAc...) asparagine glycan. Catalysis depends on residues D324 and H327.

This sequence belongs to the 'GDSL' lipolytic enzyme family.

It is found in the secreted. Represses or inhibits nitriles production from methionine-derived and from indol-3-ylmethyl glucosinolates. Favors isothiocyanate production. In Arabidopsis thaliana (Mouse-ear cress), this protein is GDSL esterase/lipase ESM1 (ESM1).